Reading from the N-terminus, the 466-residue chain is Citrate synthase, mitochondrial (466 aa).

Residues 1 to 27 (MALLTAAARLLGTKNASCLVLAARHAS) constitute a mitochondrion transit peptide. Positions 2–21 (ALLTAAARLLGTKNASCLVL) match the SIFI-degron motif. The residue at position 57 (Lys57) is an N6-succinyllysine. N6-acetyllysine; alternate is present on Lys76. Lys76 carries the post-translational modification N6-succinyllysine; alternate. An N6-succinyllysine mark is found at Lys103 and Lys193. His301 is a catalytic residue. Lys321 and Lys327 each carry N6-acetyllysine; alternate. N6-succinyllysine; alternate is present on residues Lys321 and Lys327. Residue His347 is part of the active site. Residue Arg356 participates in oxaloacetate binding. At Lys375 the chain carries N6-acetyllysine; alternate. N6-succinyllysine; alternate is present on Lys375. Lys382 bears the N6-acetyllysine mark. Lys393 is subject to N6-acetyllysine; alternate. An N6-succinyllysine; alternate modification is found at Lys393. Lys395 carries the N6,N6,N6-trimethyllysine modification. Asp402 is a catalytic residue. 2 residues coordinate oxaloacetate: Arg428 and Arg448. Lys450 carries the N6-succinyllysine modification. Lys459 is modified (N6-acetyllysine; alternate). Lys459 is subject to N6-succinyllysine; alternate.

Belongs to the citrate synthase family. As to quaternary structure, homodimer. In terms of processing, methylated. Trimethylation at Lys-395 by CSKMT decreases citrate synthase activity. In response to mitochondrial stress, the precursor protein is ubiquitinated by the SIFI complex in the cytoplasm before mitochondrial import, leading to its degradation. Within the SIFI complex, UBR4 initiates ubiquitin chain that are further elongated or branched by KCMF1.

It is found in the mitochondrion matrix. It carries out the reaction oxaloacetate + acetyl-CoA + H2O = citrate + CoA + H(+). The protein operates within carbohydrate metabolism; tricarboxylic acid cycle; isocitrate from oxaloacetate: step 1/2. Its function is as follows. Key enzyme of the Krebs tricarboxylic acid cycle which catalyzes the synthesis of citrate from acetyl coenzyme A and oxaloacetate. The protein is Citrate synthase, mitochondrial (CS) of Macaca fascicularis (Crab-eating macaque).